Consider the following 221-residue polypeptide: MYAPIRSPITELNESTPSSIPVATSYATCSASFAKLVALLVDDMAGLSIVLSEIYIYFKLLFLIVITESIQNKLEDIVKEYKKRGIDLGIITNVDEVSLFFDTSQYAEAIKKKVIEIVRQSGTGRAKIDFKTNGYVIKFAIQRGYYNRNTIEKLKSLVDYLHEQKIRCGYEIKGDLIFVMSLTDFLQKISEDVKEKLKDERVKIASKQEYTKYIVVIKVEQ.

Residues 1–45 (MYAPIRSPITELNESTPSSIPVATSYATCSASFAKLVALLVDDMA) lie on the Extracellular side of the membrane. A helical transmembrane segment spans residues 46–66 (GLSIVLSEIYIYFKLLFLIVI). At 67–221 (TESIQNKLED…KYIVVIKVEQ (155 aa)) the chain is on the cytoplasmic side.

It is found in the host membrane. This is an uncharacterized protein from Acidianus filamentous virus 1 (isolate United States/Yellowstone) (AFV-1).